A 707-amino-acid chain; its full sequence is Ribosomal RNA large subunit methyltransferase K/L (707 aa).

A THUMP domain is found at 43-154 (QIYRCCLWSR…KDKAILGVDM (112 aa)).

This sequence belongs to the methyltransferase superfamily. RlmKL family.

It localises to the cytoplasm. It catalyses the reaction guanosine(2445) in 23S rRNA + S-adenosyl-L-methionine = N(2)-methylguanosine(2445) in 23S rRNA + S-adenosyl-L-homocysteine + H(+). The catalysed reaction is guanosine(2069) in 23S rRNA + S-adenosyl-L-methionine = N(2)-methylguanosine(2069) in 23S rRNA + S-adenosyl-L-homocysteine + H(+). Functionally, specifically methylates the guanine in position 2445 (m2G2445) and the guanine in position 2069 (m7G2069) of 23S rRNA. This chain is Ribosomal RNA large subunit methyltransferase K/L, found in Vibrio parahaemolyticus serotype O3:K6 (strain RIMD 2210633).